The sequence spans 61 residues: Bacteriocin sakacin-P (61 aa).

The propeptide occupies 1-18; the sequence is MEKFIELSLKEVTAITGG. An intrachain disulfide couples Cys-27 to Cys-32.

The protein belongs to the bacteriocin class IIA/YGNGV family.

Its subcellular location is the secreted. Bactericidal activity; inhibits closely related Lactobacilli, Listeria monocytogenes and ivanovvi, Enterococcus faecalis, Carnobacterium sp and Brocothrix thermosphacta. This is Bacteriocin sakacin-P (sakP) from Latilactobacillus sakei (Lactobacillus sakei).